The primary structure comprises 302 residues: Oxygen-dependent coproporphyrinogen-III oxidase (302 aa).

Ser94 contacts substrate. Residues His98 and His108 each contribute to the a divalent metal cation site. The active-site Proton donor is the His108. Position 110–112 (110–112 (NVR)) interacts with substrate. A divalent metal cation-binding residues include His147 and His177. Positions 242-277 (YVEFNLVYDRGTLFGLQTGGRTESILMSMPPLARWE) are important for dimerization. 260–262 (GGR) contacts substrate.

Belongs to the aerobic coproporphyrinogen-III oxidase family. In terms of assembly, homodimer. Requires a divalent metal cation as cofactor.

It localises to the cytoplasm. It catalyses the reaction coproporphyrinogen III + O2 + 2 H(+) = protoporphyrinogen IX + 2 CO2 + 2 H2O. It functions in the pathway porphyrin-containing compound metabolism; protoporphyrin-IX biosynthesis; protoporphyrinogen-IX from coproporphyrinogen-III (O2 route): step 1/1. Its function is as follows. Involved in the heme biosynthesis. Catalyzes the aerobic oxidative decarboxylation of propionate groups of rings A and B of coproporphyrinogen-III to yield the vinyl groups in protoporphyrinogen-IX. The protein is Oxygen-dependent coproporphyrinogen-III oxidase of Aeromonas hydrophila subsp. hydrophila (strain ATCC 7966 / DSM 30187 / BCRC 13018 / CCUG 14551 / JCM 1027 / KCTC 2358 / NCIMB 9240 / NCTC 8049).